The following is a 479-amino-acid chain: Bifunctional AAC/APH (479 aa).

In terms of domain architecture, N-acetyltransferase spans 8–180 (ICIRTLIDDD…DCYLMEYRYD (173 aa)). The acetyl-CoA binding site stretch occupies residues 110–153 (KGIGTRYIKLIFEFLKKERNANAVILDPHKNNPRAIRAYQKSGF). D374 acts as the Proton acceptor; for phosphotransferase activity in catalysis. A gentamycin is bound at residue D393.

The protein in the C-terminal section; belongs to the aminoglycoside phosphotransferase family.

Its subcellular location is the cytoplasm. The catalysed reaction is a gentamycin + GTP = a gentamycin 2''-phosphate + GDP + H(+). In terms of biological role, involved in resistance to gentamicin, tobramycin, and kanamycin. Tobramycin and kanamycin resistance is due to the ACC activity, specified by N-terminal region. The C-terminal region is a kinase that phosphorylates several 4,6-disubstituted aminoglycosides. The protein is Bifunctional AAC/APH (aacA-aphD) of Enterococcus faecalis (strain ATCC 700802 / V583).